The chain runs to 354 residues: Glutamine synthetase (354 aa).

The GS beta-grasp domain occupies 22–101 (VQAEYVWIDG…VLAETFNNDG (80 aa)). Positions 108–354 (HRHHTKKVMD…IIVETTVLDK (247 aa)) constitute a GS catalytic domain.

Belongs to the glutamine synthetase family. In terms of assembly, homooctamer.

It is found in the cytoplasm. It catalyses the reaction L-glutamate + NH4(+) + ATP = L-glutamine + ADP + phosphate + H(+). The sequence is that of Glutamine synthetase (GLNA) from Suillus bovinus (Jersey cow bolete).